Reading from the N-terminus, the 544-residue chain is CTP synthase (544 aa).

Positions 1 to 265 (MTKFIFVTGG…DNIITEQLQL (265 aa)) are amidoligase domain. Serine 13 contacts CTP. Serine 13 is a UTP binding site. ATP is bound by residues 14–19 (SLGKGI) and aspartate 71. Residues aspartate 71 and glutamate 139 each coordinate Mg(2+). CTP is bound by residues 146–148 (DIE), 186–191 (KTKPTQ), and lysine 222. UTP contacts are provided by residues 186–191 (KTKPTQ) and lysine 222. The region spanning 290 to 544 (KIAMVGKYVD…VKAALNNKKA (255 aa)) is the Glutamine amidotransferase type-1 domain. Glycine 353 provides a ligand contact to L-glutamine. Cysteine 380 acts as the Nucleophile; for glutamine hydrolysis in catalysis. Residues 381–384 (LGMQ), glutamate 404, and arginine 471 each bind L-glutamine. Residues histidine 517 and glutamate 519 contribute to the active site.

Belongs to the CTP synthase family. Homotetramer.

It catalyses the reaction UTP + L-glutamine + ATP + H2O = CTP + L-glutamate + ADP + phosphate + 2 H(+). The enzyme catalyses L-glutamine + H2O = L-glutamate + NH4(+). The catalysed reaction is UTP + NH4(+) + ATP = CTP + ADP + phosphate + 2 H(+). It participates in pyrimidine metabolism; CTP biosynthesis via de novo pathway; CTP from UDP: step 2/2. With respect to regulation, allosterically activated by GTP, when glutamine is the substrate; GTP has no effect on the reaction when ammonia is the substrate. The allosteric effector GTP functions by stabilizing the protein conformation that binds the tetrahedral intermediate(s) formed during glutamine hydrolysis. Inhibited by the product CTP, via allosteric rather than competitive inhibition. In terms of biological role, catalyzes the ATP-dependent amination of UTP to CTP with either L-glutamine or ammonia as the source of nitrogen. Regulates intracellular CTP levels through interactions with the four ribonucleotide triphosphates. In Neisseria meningitidis serogroup B (strain ATCC BAA-335 / MC58), this protein is CTP synthase.